A 362-amino-acid chain; its full sequence is Serine/threonine-protein kinase-like protein At3g51990 (362 aa).

Residues 1 to 24 (MGYLSCKAGSAVAIAVSSAASTSG) form the signal peptide. Residues 21–32 (STSGSTSSKASA) show a composition bias toward low complexity. The segment at 21–43 (STSGSTSSKASAPPESPIEDRPR) is disordered. The Protein kinase domain occupies 59–329 (FDINNLLGRG…PGMEEVVGWL (271 aa)). ATP-binding positions include 65 to 73 (LGRGSHGSV) and lysine 86. The N-linked (GlcNAc...) asparagine glycan is linked to asparagine 136. Aspartate 185 serves as the catalytic Proton acceptor. Serine 219 is subject to Phosphoserine. Residues threonine 220 and threonine 225 each carry the phosphothreonine modification. Position 233 is a phosphotyrosine (tyrosine 233).

It belongs to the protein kinase superfamily. Ser/Thr protein kinase family.

The protein resides in the secreted. It carries out the reaction L-seryl-[protein] + ATP = O-phospho-L-seryl-[protein] + ADP + H(+). The enzyme catalyses L-threonyl-[protein] + ATP = O-phospho-L-threonyl-[protein] + ADP + H(+). In Arabidopsis thaliana (Mouse-ear cress), this protein is Serine/threonine-protein kinase-like protein At3g51990.